A 504-amino-acid chain; its full sequence is Maturase K (504 aa).

This sequence belongs to the intron maturase 2 family. MatK subfamily.

Its subcellular location is the plastid. It localises to the chloroplast. Functionally, usually encoded in the trnK tRNA gene intron. Probably assists in splicing its own and other chloroplast group II introns. In Cynophalla hastata (Broadleaf caper), this protein is Maturase K.